The chain runs to 406 residues: Glycosylated lysosomal membrane protein (406 aa).

The first 35 residues, Met1–Gly35, serve as a signal peptide directing secretion. Topologically, residues Glu36–Gly372 are lumenal. Residues Asn65, Asn134, Asn159, Asn187, and Asn230 are each glycosylated (N-linked (GlcNAc...) asparagine). A helical transmembrane segment spans residues Ile373–Leu393. Residues Leu394 to Asn406 are Cytoplasmic-facing. The short motif at Tyr402 to Asn406 is the Lysosomal targeting motif element.

It belongs to the GLMP family. Interacts (via lumenal domain) with lysosomal protein MFSD1; the interaction starts while both proteins are still in the endoplasmic reticulum and is required for stabilization of MFSD1 in lysosomes but has no direct effect on its targeting to lysosomes or transporter activity. Highly N-glycosylated. N-glycosylation is essential for GLMP stability and for MFSD1 lysosomal localization.

It localises to the lysosome membrane. Required to protect lysosomal transporter MFSD1 from lysosomal proteolysis and for MFSD1 lysosomal localization. The polypeptide is Glycosylated lysosomal membrane protein (Homo sapiens (Human)).